Reading from the N-terminus, the 252-residue chain is ATP synthase subunit a (252 aa).

Helical transmembrane passes span 33–53, 92–112, 130–150, 196–216, and 217–237; these read GQVFITTWFVMALLIAVAFVA, VPFVGTLFLFIFVCNWSGALV, DINTTVALALLVSLAYFYAGL, LVVSVLVLLVPLFVPLPVMVL, and GLFTSAIQALVFATLAATYIG.

Belongs to the ATPase A chain family. F-type ATPases have 2 components, CF(1) - the catalytic core - and CF(0) - the membrane proton channel. CF(1) has five subunits: alpha(3), beta(3), gamma(1), delta(1), epsilon(1). CF(0) has four main subunits: a, b, b' and c.

It is found in the cellular thylakoid membrane. Functionally, key component of the proton channel; it plays a direct role in the translocation of protons across the membrane. The protein is ATP synthase subunit a of Thermosynechococcus vestitus (strain NIES-2133 / IAM M-273 / BP-1).